Consider the following 343-residue polypeptide: Lactamase-like protein nscB (343 aa).

Residues H118, H120, D122, and H123 each contribute to the Zn(2+) site. D122 acts as the Proton donor/acceptor in catalysis.

Belongs to the metallo-beta-lactamase superfamily. The cofactor is Zn(2+).

The protein operates within secondary metabolite biosynthesis. In terms of biological role, lactamase-like protein; part of the gene cluster that mediates the biosynthesis of neosartoricin B, a prenylated anthracenone that probably exhibits T-cell antiproliferative activity, suggestive of a physiological role as an immunosuppressive agent. The non-reducing polyketide synthase nscA probably synthesizes and cyclizes the decaketide backbone. The hydrolase nscB then mediates the product release through hydrolysis followed by spontaneous decarboxylation. The prenyltransferase nscD catalyzes the addition of the dimethylallyl group to the aromatic C5. The FAD-dependent monooxygenase nscC is then responsible for the stereospecific hydroxylation at C2. Neosartoricin B can be converted into two additional compounds neosartoricins C and D. Neosartoricin C is a spirocyclic compound that is cyclized through the attack of C3 hydroxyl on C14, followed by dehydration. On the other hand, neosartoricin D is a further cyclized compound in which attack of C2 on C14 in neosartoricin C results in the formation of the acetal-containing dioxabicyclo-octanone ring. Both of these compounds are novel and possibly represent related metabolites of the gene cluster. The chain is Lactamase-like protein nscB from Arthroderma otae (strain ATCC MYA-4605 / CBS 113480) (Microsporum canis).